A 177-amino-acid polypeptide reads, in one-letter code: Large ribosomal subunit protein uL6 (177 aa).

A compositionally biased stretch (basic and acidic residues) spans 152–171 (RPPEPYKGKGVRYDDEEVRR). A disordered region spans residues 152 to 177 (RPPEPYKGKGVRYDDEEVRRKEAKKK).

The protein belongs to the universal ribosomal protein uL6 family. In terms of assembly, part of the 50S ribosomal subunit.

Functionally, this protein binds to the 23S rRNA, and is important in its secondary structure. It is located near the subunit interface in the base of the L7/L12 stalk, and near the tRNA binding site of the peptidyltransferase center. This Shewanella oneidensis (strain ATCC 700550 / JCM 31522 / CIP 106686 / LMG 19005 / NCIMB 14063 / MR-1) protein is Large ribosomal subunit protein uL6.